We begin with the raw amino-acid sequence, 645 residues long: MSQVHIHPVPADYKKQTLMDRETYDRWYSQSINDPGTFWAERAEQLLDWKTPWDTVSEWDFNEGRAAWFKGATLNACYNCVDRHLPERANQTAIIWEGDEPDQDKHISYQQLFEEVSKFGNVLKNRGVKKGDRVVIYMPMIPEAAYAMLACARIGAIHSVVFGGFSPEALKDRILNAEACALITADEGVRGGKTIPLKVNADKALDGIDCVHTCLTVKRTGGDVDWQAPRDVWYHEAMADASSDCEPEWVEAEDPLFTLYTSGSTGKPKGVVHTTAGYLLNTALTHKYVFDYQDGDIYWCTADVGWITGHSYIVYGPLANGATTLMFEGVPTYPDASRCWQVVDKHKVNIFYTAPTAIRALMGLGDAPVEQTSRASLKLLGTVGEPINPEAWEWYYRVVGDSRCPIVDTWWQTETGAIMIAPLPGAVDLKAGSATLPMFGVQPGLMDPDGNELDGAASGNLVLKASWPSQIRTVYGDHQRLIDTYFSAYKGCYFTGDGARRDEDGYYWITGRVDDVLNVSGHRLGTAEIESALVLHPSISEAAVVGYQHDVKGQGIYAYVSLMAGKEGSEELVKALRDLVTQEIGPIAKPDLIHFAPGLPKTRSGKIMRRILRKIAADELDSLGDTSTLADPSVVDQLIDNRQNK.

Residues 190-193 (RGGK) and Thr308 each bind CoA. Residues 384 to 386 (GEP), 408 to 413 (DTWWQT), Asp497, and Arg512 contribute to the ATP site. Ser520 serves as a coordination point for CoA. An ATP-binding site is contributed by Arg523. Val534, His536, and Ile539 together coordinate Mg(2+). Position 606 is an N6-acetyllysine (Lys606).

This sequence belongs to the ATP-dependent AMP-binding enzyme family. Requires Mg(2+) as cofactor. In terms of processing, acetylated. Deacetylation by the SIR2-homolog deacetylase activates the enzyme.

The enzyme catalyses acetate + ATP + CoA = acetyl-CoA + AMP + diphosphate. In terms of biological role, catalyzes the conversion of acetate into acetyl-CoA (AcCoA), an essential intermediate at the junction of anabolic and catabolic pathways. AcsA undergoes a two-step reaction. In the first half reaction, AcsA combines acetate with ATP to form acetyl-adenylate (AcAMP) intermediate. In the second half reaction, it can then transfer the acetyl group from AcAMP to the sulfhydryl group of CoA, forming the product AcCoA. The chain is Acetyl-coenzyme A synthetase from Alcanivorax borkumensis (strain ATCC 700651 / DSM 11573 / NCIMB 13689 / SK2).